Reading from the N-terminus, the 855-residue chain is MHNMEEVREVKVLEKPWVEKYRPQRLDEIVGQEHIVKRLKHYVKTGSMPHLLFAGPPGVGKCLTGDTKVIANGQLFELRELVEKISGGKFGPTPVKGLKVIGIDEDGKLREFEVQYVYKDKTERLIRIRTRLGRELKVTPYHPLLVNRRNGEIKWVKAEELKPGDKLAVPRFLPIVTGEDPLAEWLGYFLGGGYADSKENLIMFTNEDPLLRQRFMELTEKLFSDARIREITHENGTSKVYVNSKKALKLVNSLGNAHIPKECWRGIRSFLRAYFDCNGGVKGNAIVLATASKEMSQEIAYALAGFGIISRIQEYRVIISGSDNVKKFLNEIGFINRNKLEKALKLVKKDDPGHDGLEINYELISYVKDRLRLSFFNDKRSWSYREAKEISWELMKEIYYRLDELEKLKESLSRGILIDWNEVAKRIEEVAEETGIRADELLEYIEGKRKLSFKDYIKIAKVLGIDVEHTIEAMRVFARKYSSYAEIGRRLGTWNSSVKTILESNAVNVEILERIRKIELELIEEILSDEKLKEGIAYLIFLSQNELYWDEITKVEELRGEFIIYDLHVPGYHNFIAGNMPTVVHNTTAALALSRELFGENWRHNFLELNASDERGINVIREKVKEFARTKPIGGASFKIIFLDEADALTQDAQQALRRTMEMFSSNVRFILSCNYSSKIIEPIQSRCAIFRFRPLRDEDIAKRLRYIAENEGLELTEEGLQAILYIAEGDMRRAINILQAAAALDKKITDENVFMVASRARPEDIREMMLLALKGNFLKAREKLREILLKQGLSGEDVLIQMHKEVFNLPIDEPTKVYLADKIGEYNFRLVEGANEMIQLEALLAQFTLVGKKK.

The 124-residue stretch at Trp185–Ile308 folds into the DOD-type homing endonuclease domain.

This sequence belongs to the activator 1 small subunits family. RfcS subfamily. Heteromultimer composed of small subunits (RfcS) and large subunits (RfcL). This protein undergoes a protein self splicing that involves a post-translational excision of the intervening region (intein) followed by peptide ligation.

In terms of biological role, part of the RFC clamp loader complex which loads the PCNA sliding clamp onto DNA. This is Replication factor C small subunit (rfcS) from Pyrococcus horikoshii (strain ATCC 700860 / DSM 12428 / JCM 9974 / NBRC 100139 / OT-3).